A 492-amino-acid polypeptide reads, in one-letter code: 2,3-bisphosphoglycerate-independent phosphoglycerate mutase (492 aa).

2 residues coordinate Mn(2+): Asp-11 and Ser-61. The active-site Phosphoserine intermediate is the Ser-61. Residues His-118, 147-148 (RD), Arg-178, Arg-184, 248-251 (RNDR), and Lys-320 contribute to the substrate site. Positions 386, 390, 427, 428, and 445 each coordinate Mn(2+).

The protein belongs to the BPG-independent phosphoglycerate mutase family. As to quaternary structure, monomer. The cofactor is Mn(2+).

The catalysed reaction is (2R)-2-phosphoglycerate = (2R)-3-phosphoglycerate. The protein operates within carbohydrate degradation; glycolysis; pyruvate from D-glyceraldehyde 3-phosphate: step 3/5. Its function is as follows. Catalyzes the interconversion of 2-phosphoglycerate and 3-phosphoglycerate. This is 2,3-bisphosphoglycerate-independent phosphoglycerate mutase from Campylobacter jejuni subsp. jejuni serotype O:2 (strain ATCC 700819 / NCTC 11168).